Consider the following 420-residue polypeptide: FLYWCH transcription factor 3 (420 aa).

Residues 87 to 104 (SSTSPDSQPSSSSSVMSS) show a composition bias toward low complexity. 2 disordered regions span residues 87–107 (SSTS…STDE) and 119–138 (KINK…YTPR). Polar residues predominate over residues 123 to 134 (AQRQSSPNSSKP). The FLYWCH-type zinc finger occupies 140-195 (IRERVLFDEHLYVFDKCSYDSKKRFFRCERKNTCPARIHTPFDAERVIHKVQVHNH).

Probable transcription factor. May bind to the promoters of target genes, including micro-RNA genes, in order to repress expression, and acting redundantly with flh-2. This chain is FLYWCH transcription factor 3, found in Caenorhabditis elegans.